A 227-amino-acid polypeptide reads, in one-letter code: Putative ankyrin repeat protein L45 (227 aa).

6 ANK repeats span residues 38–66, 78–107, 108–137, 139–167, 168–197, and 199–227; these read FETN…NINH, CLEE…NIFH, NENC…DVRA, NDYA…DVRS, CDSY…NYRA, and NHHA…GITK.

This chain is Putative ankyrin repeat protein L45, found in Acanthamoeba polyphaga mimivirus (APMV).